The primary structure comprises 37 residues: Large ribosomal subunit protein bL36 (37 aa).

It belongs to the bacterial ribosomal protein bL36 family.

This Trichodesmium erythraeum (strain IMS101) protein is Large ribosomal subunit protein bL36.